A 363-amino-acid polypeptide reads, in one-letter code: Phosphoserine aminotransferase (363 aa).

Arg-42 serves as a coordination point for L-glutamate. Pyridoxal 5'-phosphate contacts are provided by residues 76–77 (GR), Trp-102, Thr-156, Asp-175, and Gln-198. N6-(pyridoxal phosphate)lysine is present on Lys-199. Residue 240 to 241 (NT) participates in pyridoxal 5'-phosphate binding.

It belongs to the class-V pyridoxal-phosphate-dependent aminotransferase family. SerC subfamily. As to quaternary structure, homodimer. Pyridoxal 5'-phosphate serves as cofactor.

It is found in the cytoplasm. It catalyses the reaction O-phospho-L-serine + 2-oxoglutarate = 3-phosphooxypyruvate + L-glutamate. The catalysed reaction is 4-(phosphooxy)-L-threonine + 2-oxoglutarate = (R)-3-hydroxy-2-oxo-4-phosphooxybutanoate + L-glutamate. The protein operates within amino-acid biosynthesis; L-serine biosynthesis; L-serine from 3-phospho-D-glycerate: step 2/3. It functions in the pathway cofactor biosynthesis; pyridoxine 5'-phosphate biosynthesis; pyridoxine 5'-phosphate from D-erythrose 4-phosphate: step 3/5. Catalyzes the reversible conversion of 3-phosphohydroxypyruvate to phosphoserine and of 3-hydroxy-2-oxo-4-phosphonooxybutanoate to phosphohydroxythreonine. This chain is Phosphoserine aminotransferase, found in Shewanella halifaxensis (strain HAW-EB4).